Reading from the N-terminus, the 179-residue chain is Guanosine-3',5'-bis(diphosphate) 3'-pyrophosphohydrolase MESH1 (179 aa).

N-acetylglycine is present on Gly-2. At Lys-25 the chain carries N6-acetyllysine. One can recognise an HD domain in the interval 32–127 (YINHPIGVAR…VKLADKLYNL (96 aa)). Residues His-35, His-61, and Asp-62 each contribute to the Mn(2+) site. Residues Glu-65 and Asp-66 each act as nucleophile in the active site. Lys-97 carries the N6-acetyllysine modification. Asp-122 contributes to the Mn(2+) binding site. Lys-123 carries the N6-acetyllysine modification.

This sequence belongs to the MESH1 family. Mn(2+) serves as cofactor.

The enzyme catalyses guanosine 3',5'-bis(diphosphate) + H2O = GDP + diphosphate + H(+). Its function is as follows. ppGpp hydrolyzing enzyme involved in starvation response. The protein is Guanosine-3',5'-bis(diphosphate) 3'-pyrophosphohydrolase MESH1 (HDDC3) of Homo sapiens (Human).